The following is a 298-amino-acid chain: Transcription factor bHLH114 (298 aa).

Residues 117-149 are a coiled coil; sequence LDHEIRNHKSSKEQITQDYKNLTSKRSEELEEN. A disordered region spans residues 126–154; that stretch reads SSKEQITQDYKNLTSKRSEELEENSDEYS. Positions 129–140 are enriched in polar residues; the sequence is EQITQDYKNLTS. Residues 163-212 enclose the bHLH domain; it reads LETLSPLPSFKVRKEKLGDRITALQQLVSPFGKTDTASVLNEAVEYIKFL.

In terms of assembly, homodimer. Differentiating root endodermis.

It is found in the nucleus. The chain is Transcription factor bHLH114 (BHLH114) from Arabidopsis thaliana (Mouse-ear cress).